A 475-amino-acid chain; its full sequence is Aspartyl/glutamyl-tRNA(Asn/Gln) amidotransferase subunit B (475 aa).

The protein belongs to the GatB/GatE family. GatB subfamily. As to quaternary structure, heterotrimer of A, B and C subunits.

It catalyses the reaction L-glutamyl-tRNA(Gln) + L-glutamine + ATP + H2O = L-glutaminyl-tRNA(Gln) + L-glutamate + ADP + phosphate + H(+). It carries out the reaction L-aspartyl-tRNA(Asn) + L-glutamine + ATP + H2O = L-asparaginyl-tRNA(Asn) + L-glutamate + ADP + phosphate + 2 H(+). Functionally, allows the formation of correctly charged Asn-tRNA(Asn) or Gln-tRNA(Gln) through the transamidation of misacylated Asp-tRNA(Asn) or Glu-tRNA(Gln) in organisms which lack either or both of asparaginyl-tRNA or glutaminyl-tRNA synthetases. The reaction takes place in the presence of glutamine and ATP through an activated phospho-Asp-tRNA(Asn) or phospho-Glu-tRNA(Gln). This chain is Aspartyl/glutamyl-tRNA(Asn/Gln) amidotransferase subunit B, found in Staphylococcus haemolyticus (strain JCSC1435).